Here is a 421-residue protein sequence, read N- to C-terminus: Uracil permease (421 aa).

Transmembrane regions (helical) follow at residues 18–38, 41–61, 65–85, 89–109, 115–135, 160–180, 186–206, 232–252, 304–324, 329–349, 371–391, and 393–413; these read IPLS…VPML, INPA…IFLC, IPAY…VIST, EAAL…GLLV, GWIE…VIGL, PKVI…NVMF, IIPI…LGIV, IAII…HLIV, VYSI…SFVG, LIQT…FGVI, ILTA…WGNF, and MKGM…FNII.

The protein belongs to the nucleobase:cation symporter-2 (NCS2) (TC 2.A.40) family.

It is found in the cell membrane. Its activity is regulated as follows. Inhibited by the proton gradient disruptor carbonyl cyanide m-chlorophenylhydrazone (CCCP), but not by the sodium gradient disruptor ouabain. Both xanthine and uric acid act as competitive inhibitors of uracil transport. Its function is as follows. Specific for the uptake of uracil. Transport is probably proton-dependent. The sequence is that of Uracil permease from Paenibacillus larvae subsp. larvae (strain NRRL B-3650 / LMG 16245).